Reading from the N-terminus, the 224-residue chain is Germin-like protein 1-2 (224 aa).

Positions 1–29 (MASSRSVVLRVLVAVAVVAAAGAPRLAVA) are cleaved as a signal peptide. C38 and C53 form a disulfide bridge. The 149-residue stretch at 67–215 (DAIVQAPSTS…TFLMGEDEVG (149 aa)) folds into the Cupin type-1 domain. N82 carries an N-linked (GlcNAc...) asparagine glycan. The Mn(2+) site is built by H115, H117, E122, and H161. An N-linked (GlcNAc...) asparagine glycan is attached at N170.

The protein belongs to the germin family. Oligomer (believed to be a pentamer but probably hexamer).

Its subcellular location is the secreted. The protein resides in the extracellular space. The protein localises to the apoplast. May play a role in plant defense. Probably has no oxalate oxidase activity even if the active site is conserved. The protein is Germin-like protein 1-2 of Oryza sativa subsp. japonica (Rice).